A 149-amino-acid polypeptide reads, in one-letter code: Transcription antitermination protein NusB (149 aa).

The protein belongs to the NusB family.

In terms of biological role, involved in transcription antitermination. Required for transcription of ribosomal RNA (rRNA) genes. Binds specifically to the boxA antiterminator sequence of the ribosomal RNA (rrn) operons. In Acinetobacter baylyi (strain ATCC 33305 / BD413 / ADP1), this protein is Transcription antitermination protein NusB.